The sequence spans 418 residues: Glutamyl-tRNA reductase (418 aa).

Residues 49–52, S107, 112–114, and Q118 contribute to the substrate site; these read TCNR and EPQ. C50 (nucleophile) is an active-site residue. 187-192 is an NADP(+) binding site; sequence GAGETI.

This sequence belongs to the glutamyl-tRNA reductase family. In terms of assembly, homodimer.

It carries out the reaction (S)-4-amino-5-oxopentanoate + tRNA(Glu) + NADP(+) = L-glutamyl-tRNA(Glu) + NADPH + H(+). It participates in porphyrin-containing compound metabolism; protoporphyrin-IX biosynthesis; 5-aminolevulinate from L-glutamyl-tRNA(Glu): step 1/2. In terms of biological role, catalyzes the NADPH-dependent reduction of glutamyl-tRNA(Glu) to glutamate 1-semialdehyde (GSA). In Aeromonas salmonicida (strain A449), this protein is Glutamyl-tRNA reductase.